We begin with the raw amino-acid sequence, 96 residues long: Co-chaperonin GroES (96 aa).

This sequence belongs to the GroES chaperonin family. As to quaternary structure, heptamer of 7 subunits arranged in a ring. Interacts with the chaperonin GroEL.

The protein localises to the cytoplasm. Functionally, together with the chaperonin GroEL, plays an essential role in assisting protein folding. The GroEL-GroES system forms a nano-cage that allows encapsulation of the non-native substrate proteins and provides a physical environment optimized to promote and accelerate protein folding. GroES binds to the apical surface of the GroEL ring, thereby capping the opening of the GroEL channel. This Polaromonas naphthalenivorans (strain CJ2) protein is Co-chaperonin GroES.